The primary structure comprises 79 residues: MVDAITVLTAICITVLMLLMVISGTAMIVKELNPNDIFTMQSLKFNRTVTIFKYIGLFIYIPGTIILYATYVKSLLMKN.

The Intravirion portion of the chain corresponds to 2–8 (VDAITVL). Residues 9 to 29 (TAICITVLMLLMVISGTAMIV) traverse the membrane as a helical segment. The Virion surface segment spans residues 30 to 47 (KELNPNDIFTMQSLKFNR). A helical membrane pass occupies residues 48-68 (TVTIFKYIGLFIYIPGTIILY). At 69–79 (ATYVKSLLMKN) the chain is on the intravirion side.

This sequence belongs to the orthopoxvirus OPG081 family.

The protein resides in the virion membrane. Its function is as follows. Envelope protein. This is Protein OPG081 (OPG081) from Cynomys gunnisoni (Gunnison's prairie dog).